The following is a 502-amino-acid chain: Glycerol kinase (502 aa).

Residue Thr14 coordinates ADP. Positions 14, 15, and 16 each coordinate ATP. Thr14 serves as a coordination point for sn-glycerol 3-phosphate. Position 18 (Arg18) interacts with ADP. The sn-glycerol 3-phosphate site is built by Arg84, Glu85, Tyr136, and Asp246. 5 residues coordinate glycerol: Arg84, Glu85, Tyr136, Asp246, and Gln247. Thr268 and Gly311 together coordinate ADP. Residues Thr268, Gly311, Gln315, and Gly412 each contribute to the ATP site. ADP is bound by residues Gly412 and Asn416.

It belongs to the FGGY kinase family. Homotetramer and homodimer (in equilibrium). Heterodimer with EIIA-Glc. Binds 1 zinc ion per glycerol kinase EIIA-Glc dimer. The zinc ion is important for dimerization.

The catalysed reaction is glycerol + ATP = sn-glycerol 3-phosphate + ADP + H(+). Its pathway is polyol metabolism; glycerol degradation via glycerol kinase pathway; sn-glycerol 3-phosphate from glycerol: step 1/1. With respect to regulation, activity of this regulatory enzyme is affected by several metabolites. Allosterically and non-competitively inhibited by fructose 1,6-bisphosphate (FBP) and unphosphorylated phosphocarrier protein EIIA-Glc (III-Glc), an integral component of the bacterial phosphotransferase (PTS) system. Its function is as follows. Key enzyme in the regulation of glycerol uptake and metabolism. Catalyzes the phosphorylation of glycerol to yield sn-glycerol 3-phosphate. The sequence is that of Glycerol kinase from Shigella dysenteriae serotype 1 (strain Sd197).